A 102-amino-acid polypeptide reads, in one-letter code: Small ribosomal subunit protein uS10 (102 aa).

It belongs to the universal ribosomal protein uS10 family. Part of the 30S ribosomal subunit.

Functionally, involved in the binding of tRNA to the ribosomes. The protein is Small ribosomal subunit protein uS10 of Geobacter metallireducens (strain ATCC 53774 / DSM 7210 / GS-15).